We begin with the raw amino-acid sequence, 128 residues long: Z-ring associated protein G (128 aa).

A helical membrane pass occupies residues 7–27 (EIWFSISIAFLIGTLCGVLVM). Residues 37 to 75 (QIQLKSELASAEAKIEEQKQQLERHFEQSANLLENLAED) adopt a coiled-coil conformation. Positions 105-128 (NHANGDEDNQPRDYSDGSSGLLKS) are disordered. The span at 107-119 (ANGDEDNQPRDYS) shows a compositional bias: basic and acidic residues.

The protein belongs to the ZapG family. Homotetramer. In solution, is primarily monomeric but forms small amounts of stable tetramer and hexadecamer. The crystal structure of the cytosolic region shows a coiled-coil tetramer in the asymmetric unit that is very likely to be a physiologically relevant assembly of the protein.

The protein resides in the cell inner membrane. Its function is as follows. Involved in cell division, cell envelope biogenesis and cell shape maintenance. In Haemophilus ducreyi (strain 35000HP / ATCC 700724), this protein is Z-ring associated protein G.